We begin with the raw amino-acid sequence, 541 residues long: Glucose-6-phosphate isomerase (541 aa).

The active-site Proton donor is the glutamate 347. Active-site residues include histidine 378 and lysine 506.

Belongs to the GPI family.

Its subcellular location is the cytoplasm. The catalysed reaction is alpha-D-glucose 6-phosphate = beta-D-fructose 6-phosphate. It functions in the pathway carbohydrate biosynthesis; gluconeogenesis. It participates in carbohydrate degradation; glycolysis; D-glyceraldehyde 3-phosphate and glycerone phosphate from D-glucose: step 2/4. Functionally, catalyzes the reversible isomerization of glucose-6-phosphate to fructose-6-phosphate. The polypeptide is Glucose-6-phosphate isomerase (Francisella tularensis subsp. holarctica (strain OSU18)).